A 609-amino-acid chain; its full sequence is Glutamine--fructose-6-phosphate aminotransferase [isomerizing] (609 aa).

C2 functions as the Nucleophile; for GATase activity in the catalytic mechanism. Positions 2–218 (CGIVGAIAQR…EGDIAEITRR (217 aa)) constitute a Glutamine amidotransferase type-2 domain. 2 SIS domains span residues 286–426 (ADDL…LKGL) and 458–599 (LAED…VDQP). The For Fru-6P isomerization activity role is filled by K604.

Homodimer.

The protein resides in the cytoplasm. The enzyme catalyses D-fructose 6-phosphate + L-glutamine = D-glucosamine 6-phosphate + L-glutamate. Its function is as follows. Catalyzes the first step in hexosamine metabolism, converting fructose-6P into glucosamine-6P using glutamine as a nitrogen source. In Salmonella typhi, this protein is Glutamine--fructose-6-phosphate aminotransferase [isomerizing].